The following is a 444-amino-acid chain: Pestheic acid cluster transcriptional regulator 2 (444 aa).

Residues 1–22 (MEAADPNNNLTITSPSTLLSNP) show a composition bias toward polar residues. Residues 1 to 31 (MEAADPNNNLTITSPSTLLSNPTQPPAQPLK) form a disordered region. The zn(2)-C6 fungal-type DNA-binding region spans 36–63 (CHACASSKVKCHKEKPTCSRCRKRGITC). Residues 326–348 (ARVGSGVSTHTTAGQYEPQVEQQ) form a disordered region. The segment covering 331–348 (GVSTHTTAGQYEPQVEQQ) has biased composition (polar residues).

The protein resides in the nucleus. Functionally, transcription factor that, with ptaR1 and ptaR3, coregulates the expression of the gene cluster that mediates the biosynthesis of pestheic acid, a diphenyl ether which is a biosynthetic precursor of the unique chloropupukeananes. In Pestalotiopsis fici (strain W106-1 / CGMCC3.15140), this protein is Pestheic acid cluster transcriptional regulator 2.